A 411-amino-acid polypeptide reads, in one-letter code: S-adenosylmethionine synthase (411 aa).

Histidine 15 serves as a coordination point for ATP. Aspartate 17 lines the Mg(2+) pocket. Residue glutamate 43 participates in K(+) binding. The L-methionine site is built by glutamate 56 and glutamine 100. The segment at 100 to 110 (QSPDIAQGVNE) is flexible loop. Residues 171–173 (DGK), 248–249 (KF), aspartate 257, 263–264 (RK), alanine 280, and lysine 284 contribute to the ATP site. An L-methionine-binding site is contributed by aspartate 257. Lysine 288 is a binding site for L-methionine.

The protein belongs to the AdoMet synthase family. As to quaternary structure, homotetramer; dimer of dimers. Mg(2+) is required as a cofactor. The cofactor is K(+).

The protein resides in the cytoplasm. It catalyses the reaction L-methionine + ATP + H2O = S-adenosyl-L-methionine + phosphate + diphosphate. It participates in amino-acid biosynthesis; S-adenosyl-L-methionine biosynthesis; S-adenosyl-L-methionine from L-methionine: step 1/1. Functionally, catalyzes the formation of S-adenosylmethionine (AdoMet) from methionine and ATP. The overall synthetic reaction is composed of two sequential steps, AdoMet formation and the subsequent tripolyphosphate hydrolysis which occurs prior to release of AdoMet from the enzyme. This is S-adenosylmethionine synthase from Synechococcus sp. (strain CC9605).